We begin with the raw amino-acid sequence, 390 residues long: COP9/Signalosome and eIF3 complex-shared subunit 1 (390 aa).

Positions 188–351 constitute a PCI domain; the sequence is QAAKVMTALL…RTLIVSSYQH (164 aa).

It belongs to the eIF-3 subunit M family. In terms of assembly, component of the eukaryotic translation initiation factor 3 (eIF-3) complex. Within the eIF-3 complex, interacts directly with eif-3.F. Component of the CSN complex, composed of csn-1, csn-2, csn-3, csn-4, csn-5, csn-6 and csn-7. Within the CSN complex, interacts directly with csn-1 and csn-4.

It is found in the cytoplasm. Component of the eukaryotic translation initiation factor 3 (eIF-3) complex, which is involved in protein synthesis of a specialized repertoire of mRNAs and, together with other initiation factors, stimulates binding of mRNA and methionyl-tRNAi to the 40S ribosome. The eIF-3 complex specifically targets and initiates translation of a subset of mRNAs involved in cell proliferation (Potential). Component of the COP9 signalosome complex (CSN), a complex involved in various cellular and developmental processes. The CSN complex is an essential regulator of the ubiquitin (Ubl) conjugation pathway by mediating the deneddylation of the cullin subunits of the SCF-type E3 ligase complexes, leading to decrease the Ubl ligase activity of SCF. The CSN complex plays an essential role in embryogenesis and oogenesis and is required to regulate microtubule stability in the early embryo. Mediates mei-1 targeting for degradation at the meiosis to mitosis transition via deneddylation of cul-3. The polypeptide is COP9/Signalosome and eIF3 complex-shared subunit 1 (Caenorhabditis elegans).